The primary structure comprises 339 residues: 2-deoxy-scyllo-inosamine dehydrogenase (339 aa).

7 residues coordinate Zn(2+): C37, H59, C88, C91, C94, C102, and E143.

This sequence belongs to the zinc-containing alcohol dehydrogenase family. DOIA dehydrogenase subfamily. It depends on Zn(2+) as a cofactor.

It catalyses the reaction 2-deoxy-scyllo-inosamine + NADP(+) = 3-amino-2,3-dideoxy-scyllo-inosose + NADPH + H(+). The catalysed reaction is 2-deoxy-scyllo-inosamine + NAD(+) = 3-amino-2,3-dideoxy-scyllo-inosose + NADH + H(+). Its pathway is metabolic intermediate biosynthesis; 2-deoxystreptamine biosynthesis; 2-deoxystreptamine from D-glucose 6-phosphate: step 3/4. The protein operates within antibiotic biosynthesis; paromomycin biosynthesis. Its function is as follows. Catalyzes the oxidation of 2-deoxy-scyllo-inosamine (DOIA) with NAD(+) or NADP(+), forming 3-amino-2,3-dideoxy-scyllo-inosose (amino-DOI). This is 2-deoxy-scyllo-inosamine dehydrogenase (parE) from Streptomyces paromomycinus (Streptomyces rimosus subsp. paromomycinus).